Here is a 295-residue protein sequence, read N- to C-terminus: Nucleotide-binding protein CMS1991 (295 aa).

19 to 26 provides a ligand contact to ATP; that stretch reads GMSGAGRS. A GTP-binding site is contributed by 70–73; that stretch reads DVRG.

It belongs to the RapZ-like family.

Its function is as follows. Displays ATPase and GTPase activities. In Clavibacter sepedonicus (Clavibacter michiganensis subsp. sepedonicus), this protein is Nucleotide-binding protein CMS1991.